A 552-amino-acid polypeptide reads, in one-letter code: DNA ligase (552 aa).

Residue Glu244 participates in ATP binding. Lys246 (N6-AMP-lysine intermediate) is an active-site residue. ATP-binding residues include Arg251, Arg266, Glu296, Phe336, Arg408, and Lys414.

Belongs to the ATP-dependent DNA ligase family. The cofactor is Mg(2+).

It catalyses the reaction ATP + (deoxyribonucleotide)n-3'-hydroxyl + 5'-phospho-(deoxyribonucleotide)m = (deoxyribonucleotide)n+m + AMP + diphosphate.. Its function is as follows. DNA ligase that seals nicks in double-stranded DNA during DNA replication, DNA recombination and DNA repair. The sequence is that of DNA ligase from Methanothrix thermoacetophila (strain DSM 6194 / JCM 14653 / NBRC 101360 / PT) (Methanosaeta thermophila).